We begin with the raw amino-acid sequence, 217 residues long: uncharacterized protein (217 aa).

Transmembrane regions (helical) follow at residues 4-23, 44-66, 76-98, 111-128, 132-154, 166-188, and 198-215; these read IYGI…GKET, NVVI…LTWV, TVET…SIII, FLYL…IHAI, MAMV…PLAL, AGTA…IVLF, and LLLS…ALQL.

It is found in the cell membrane. This is an uncharacterized protein from Archaeoglobus fulgidus (strain ATCC 49558 / DSM 4304 / JCM 9628 / NBRC 100126 / VC-16).